Here is a 320-residue protein sequence, read N- to C-terminus: Uridine phosphorylase 2 (320 aa).

Residues Gly-66, Arg-100, and 144 to 147 (RIGT) each bind phosphate. Cys-95 and Cys-102 form a disulfide bridge. Uridine-binding positions include 148-149 (SG) and 223-225 (QGR).

It belongs to the PNP/UDP phosphorylase family. As to quaternary structure, homodimer. As to expression, liver specific.

It catalyses the reaction uridine + phosphate = alpha-D-ribose 1-phosphate + uracil. The catalysed reaction is 2'-deoxyuridine + phosphate = 2-deoxy-alpha-D-ribose 1-phosphate + uracil. It functions in the pathway pyrimidine metabolism; UMP biosynthesis via salvage pathway; uracil from uridine (phosphorylase route): step 1/1. With respect to regulation, a conditional disulfide bridge can form within the protein that dislocates a critical phosphate-coordinating arginine Arg-100 away from the active site, disabling the enzyme. Its function is as follows. Catalyzes the reversible phosphorylytic cleavage of uridine to uracil and ribose-1-phosphate which can then be utilized as carbon and energy sources or in the rescue of pyrimidine bases for nucleotide synthesis. Shows broad substrate specificity and can also accept deoxyuridine and other analogous compounds. This chain is Uridine phosphorylase 2, found in Mus musculus (Mouse).